The sequence spans 435 residues: ATP-dependent RNA helicase RhlB (435 aa).

Positions 9-37 (QKFADLGLNPQVVEGLEKKGFEFCTPIQA) match the Q motif motif. Residues 40–219 (LPVLLSGQDI…FEHMHNPEHV (180 aa)) form the Helicase ATP-binding domain. ATP is bound at residue 53–60 (AQTGTGKT). The short motif at 165 to 168 (DEAD) is the DEAD box element. Positions 245-390 (ALLQTLIEEE…VSDYDSSALI (146 aa)) constitute a Helicase C-terminal domain. The segment at 395–435 (APVRTPSARNQQRRTNTGGARSGDRKSNNRRPRQPRQHKEA) is disordered. A compositionally biased stretch (polar residues) spans 401 to 413 (SARNQQRRTNTGG). Residues 422–435 (NNRRPRQPRQHKEA) show a composition bias toward basic residues.

It belongs to the DEAD box helicase family. RhlB subfamily. In terms of assembly, component of the RNA degradosome, which is a multiprotein complex involved in RNA processing and mRNA degradation.

The protein localises to the cytoplasm. The catalysed reaction is ATP + H2O = ADP + phosphate + H(+). Functionally, DEAD-box RNA helicase involved in RNA degradation. Has RNA-dependent ATPase activity and unwinds double-stranded RNA. The chain is ATP-dependent RNA helicase RhlB from Vibrio vulnificus (strain YJ016).